Consider the following 142-residue polypeptide: Large ribosomal subunit protein uL13 (142 aa).

It belongs to the universal ribosomal protein uL13 family. Part of the 50S ribosomal subunit.

Its function is as follows. This protein is one of the early assembly proteins of the 50S ribosomal subunit, although it is not seen to bind rRNA by itself. It is important during the early stages of 50S assembly. The sequence is that of Large ribosomal subunit protein uL13 from Pseudomonas fluorescens (strain Pf0-1).